A 540-amino-acid chain; its full sequence is Serine/threonine-protein phosphatase ppzA (540 aa).

Disordered regions lie at residues methionine 1 to histidine 108 and valine 120 to lysine 140. Polar residues-rich tracts occupy residues serine 15–arginine 24 and serine 45–glycine 54. Low complexity predominate over residues alanine 62–glutamine 88. Pro residues predominate over residues proline 89 to proline 98. Over residues proline 127–proline 136 the composition is skewed to low complexity. The Mn(2+) site is built by aspartate 239, histidine 241, aspartate 267, and asparagine 299. The Phosphatase tensin-type domain occupies proline 258 to arginine 540. Histidine 300 (proton donor) is an active-site residue. Residues histidine 348 and histidine 423 each coordinate Mn(2+).

Belongs to the PPP phosphatase family. PP-Z subfamily. In terms of assembly, interacts with at least 54 proteins, of which 31 are detected only after iron starvation and 22 are detected only in control conditions. Only the regulatory subunit of the protein phosphatase PP1 (Afu1g04800/AFUB_005140) interacts with ppzA in both conditions. Mn(2+) serves as cofactor.

The protein resides in the cytoplasm. The catalysed reaction is O-phospho-L-seryl-[protein] + H2O = L-seryl-[protein] + phosphate. It catalyses the reaction O-phospho-L-threonyl-[protein] + H2O = L-threonyl-[protein] + phosphate. Catalytic subunit of protein phosphatase Z (PPZ) involved in iron assimilation. Regulates secondary metabolites production, including gliotoxin, pyripyropene A, fumagillin, fumiquinazoline A, triacetyl-fusarinine C, and helvolic acid. Plays a key role in pathogenicity. The polypeptide is Serine/threonine-protein phosphatase ppzA (Aspergillus fumigatus (strain CBS 144.89 / FGSC A1163 / CEA10) (Neosartorya fumigata)).